Consider the following 399-residue polypeptide: Dof zinc finger protein DOF5.1 (399 aa).

The segment at 95 to 149 (LKCPRCDSTNTKFCYFNNYSLTQPRHFCKACRRYWTRGGALRSVPVGGGCRRNKR) adopts a Dof-type zinc-finger fold. Zn(2+)-binding residues include C97, C100, C122, and C125. Residues 139 to 176 (PVGGGCRRNKRTKNSSGGGGGSTSSGNSKSQDSATSND) are disordered.

In terms of tissue distribution, expressed ubiquitously, especially in the vascular tissues, except in seeds, petals and anthers. Specific to the vascular tissues in young leaves, cotyledons and flower buds. The PEAR proteins (e.g. DOF2.4, DOF5.1, DOF3.2, DOF1.1, DOF5.6 and DOF5.3) form a short-range concentration gradient that peaks at protophloem sieve elements (PSE).

The protein localises to the nucleus. Functionally, transcription factor that binds specifically to a 5'-AA[AG]G-3' consensus core sequence. Binds to 5'-TAAAGT-3' motif in REV promoter to triggers its transcription, thus regulating adaxial-abaxial polarity and influencing leaf axial patterning in an auxin transport- and response-dependent manner (e.g. IAA6 and IAA19 genes expression). Probably involved in early processes for vascular development. The PEAR proteins (e.g. DOF2.4, DOF5.1, DOF3.2, DOF1.1, DOF5.6 and DOF5.3) activate gene expression that promotes radial growth of protophloem sieve elements. In Arabidopsis thaliana (Mouse-ear cress), this protein is Dof zinc finger protein DOF5.1.